The sequence spans 1417 residues: MNNGILHQNYNSKKFDIIKISLASPEVIRSWSHGEVKKPETINYRTFKPERDGLFCAKIFGPIKDYECLCGKYKRLKHRGVVCERCGVEVEQAKVRRERMGHIDLVCPVVHIWYLKSLPSRIGLFLDMPLKNVEKVLYFESYIVTDPGMTPLEKKQLLTDEEYAEALENYGYEFEASMGAEAIRDLLADTDIESEIELLQAECEESKSTAKKEKAIKRLRLLETFQASGNKPEWMVMTVLPVLPPDLRPLVPIEGGRFATSDLNDLYRRVINRNNRLKKLLDLNAPDIIVRNEKRMLQEAVDALLDNGRRGRAVTGSNKRPLKSLADMIKGKQGRFRQNLLGKRVDYSGRSVITVGPSLRLHECGLPKKMALELFKPFVYSKLRLGGHATTIKQAKRMVELEEAVVWDILETVINEHPVLLNRAPTLHRLGIQAFEPRLIEGKAIQLHPLVCAAFNADFDGDQMAVHVPLTVESQLEARVLMMSTNNILSPASGQPIITPTQDIVLGLYYITREKEGARGEGKLFSSYEDVSRAYNSGTIDIHAKIKLRIDRQVFDTKGNTYNEKGVVNTTVGRALLLNILPEGLSFSLLNKVLVKKEISKIINQAFRVLGGKATVVLADKLMYAGFKYSTLSGVSVGVDDMTIPDNKEAKIEEAEKEIKQITEQYQSSLITENERYNNIINIWSKTSDEVGASMMDAISKDTVSINGEKKEIESFNSVYMMAKSGARGSYNQMRQLAGMRGLMAKPDGTMIETAITANFREGLSVLQYFTSTHGARKGLADTALKTANAGYLTRRLVDVAQDLVVIEEDCGTDDGLMFSAIVEDGEVKVPLVERALGRTLAADVVTEKGVVLLEAGTLLDENLVELLDDNGIDMIKVRSPITCKTRRGLCAKCYGRDLARERQVNVGESVGVIAAQSIGEPGTQLTMRTFHTGGAASLGITVSDIKVKTAGKIKFKNIRTVTNKEGQEIVISRAGEIIVSDTMGRVREQHKIPMGAVVPLASGKAVEIGDVIATWDPHAQPLITDVAGKVVLEDVIDGITSKHTYDDLTGQQTIEITSISQRTTSKNLKPVVKIVDEKGAKLKSIPLAVGAVLNVADDSILEVGDIVAKIPLEGSKNKDITGGLPRVAELFEARRPKDAAILSPCDGMVRLGNRDTKEKQRIEIIDKNGHIVEEILLPKSRHLVVFDGEQVSRGDVLADGPTDPHDLLKYKGLEEFADYILIEAQSVYRMQGVVINDKHIETIVRQMLRKAVILDEGDSKFVKDESIELVRILEENDKLRKQGKKEVEYELVLMGITRSSLSTESFLSAASFQETTRVLTEASINSQIDNLRGLKENVLIGRLIPTGTGLAVRKESAKIEKMREELGVEDNMVFTDLSSFNPEEISFDSIQSQKEDKDINEDIEESLRNALESLDF.

Residues C68, C70, C83, and C86 each contribute to the Zn(2+) site. D458, D460, and D462 together coordinate Mg(2+). Residues C811, C884, C891, and C894 each coordinate Zn(2+).

The protein belongs to the RNA polymerase beta' chain family. In terms of assembly, the RNAP catalytic core consists of 2 alpha, 1 beta, 1 beta' and 1 omega subunit. When a sigma factor is associated with the core the holoenzyme is formed, which can initiate transcription. Mg(2+) serves as cofactor. Requires Zn(2+) as cofactor.

It catalyses the reaction RNA(n) + a ribonucleoside 5'-triphosphate = RNA(n+1) + diphosphate. In terms of biological role, DNA-dependent RNA polymerase catalyzes the transcription of DNA into RNA using the four ribonucleoside triphosphates as substrates. The sequence is that of DNA-directed RNA polymerase subunit beta' from Francisella tularensis subsp. mediasiatica (strain FSC147).